The primary structure comprises 277 residues: NAD kinase (277 aa).

Residue Asp55 is the Proton acceptor of the active site. NAD(+)-binding positions include 55–56 (DG), 131–132 (NE), Arg157, Asp159, and 170–175 (TAYNKS).

Belongs to the NAD kinase family. It depends on a divalent metal cation as a cofactor.

It localises to the cytoplasm. The catalysed reaction is NAD(+) + ATP = ADP + NADP(+) + H(+). In terms of biological role, involved in the regulation of the intracellular balance of NAD and NADP, and is a key enzyme in the biosynthesis of NADP. Catalyzes specifically the phosphorylation on 2'-hydroxyl of the adenosine moiety of NAD to yield NADP. This is NAD kinase from Streptococcus mutans serotype c (strain ATCC 700610 / UA159).